Consider the following 31-residue polypeptide: Photosystem II reaction center protein M (31 aa).

A helical membrane pass occupies residues 5 to 25 (ILAFIATALLILVPTAFLLII).

It belongs to the PsbM family. PSII is composed of 1 copy each of membrane proteins PsbA, PsbB, PsbC, PsbD, PsbE, PsbF, PsbH, PsbI, PsbJ, PsbK, PsbL, PsbM, PsbT, PsbX, PsbY, PsbZ, Psb30/Ycf12, at least 3 peripheral proteins of the oxygen-evolving complex and a large number of cofactors. It forms dimeric complexes.

The protein localises to the plastid membrane. In terms of biological role, one of the components of the core complex of photosystem II (PSII). PSII is a light-driven water:plastoquinone oxidoreductase that uses light energy to abstract electrons from H(2)O, generating O(2) and a proton gradient subsequently used for ATP formation. It consists of a core antenna complex that captures photons, and an electron transfer chain that converts photonic excitation into a charge separation. This subunit is found at the monomer-monomer interface. This Cuscuta reflexa (Southern Asian dodder) protein is Photosystem II reaction center protein M.